A 198-amino-acid chain; its full sequence is Recombination protein RecR (198 aa).

The C4-type zinc-finger motif lies at 56-71; the sequence is CDICGNVSEEPTCRIC. Residues 79-175 form the Toprim domain; it reads AVVCVVEEPK…NVTRLASGLP (97 aa).

It belongs to the RecR family.

May play a role in DNA repair. It seems to be involved in an RecBC-independent recombinational process of DNA repair. It may act with RecF and RecO. This is Recombination protein RecR from Saccharopolyspora erythraea (strain ATCC 11635 / DSM 40517 / JCM 4748 / NBRC 13426 / NCIMB 8594 / NRRL 2338).